The sequence spans 688 residues: Glycine--tRNA ligase beta subunit (688 aa).

The protein belongs to the class-II aminoacyl-tRNA synthetase family. Tetramer of two alpha and two beta subunits.

It localises to the cytoplasm. It carries out the reaction tRNA(Gly) + glycine + ATP = glycyl-tRNA(Gly) + AMP + diphosphate. The polypeptide is Glycine--tRNA ligase beta subunit (Geotalea uraniireducens (strain Rf4) (Geobacter uraniireducens)).